We begin with the raw amino-acid sequence, 126 residues long: Probable 4-amino-4-deoxy-L-arabinose-phosphoundecaprenol flippase subunit ArnF (126 aa).

The helical transmembrane segment at 1-21 threads the bilayer; that stretch reads MGFFWALLSVGLVSAAQLLLR. The Periplasmic portion of the chain corresponds to 22–47; sequence SAMVALPPLTDIVAFLQHLLHFQPGT. Residues 48 to 68 traverse the membrane as a helical segment; it reads FGLFFGLLGYLLSMVCWYFAL. Residues 69 to 76 lie on the Cytoplasmic side of the membrane; the sequence is HRLPLSKA. A helical transmembrane segment spans residues 77–97; it reads YALLSLSYILVWAAAIWLPGW. The Periplasmic segment spans residues 98–100; that stretch reads HEP. A helical membrane pass occupies residues 101 to 121; it reads FYWQSLLGVAIIVAGVLTIFW. The Cytoplasmic portion of the chain corresponds to 122–126; it reads PVKRR.

Belongs to the ArnF family. Heterodimer of ArnE and ArnF.

Its subcellular location is the cell inner membrane. The protein operates within bacterial outer membrane biogenesis; lipopolysaccharide biosynthesis. Its function is as follows. Translocates 4-amino-4-deoxy-L-arabinose-phosphoundecaprenol (alpha-L-Ara4N-phosphoundecaprenol) from the cytoplasmic to the periplasmic side of the inner membrane. The chain is Probable 4-amino-4-deoxy-L-arabinose-phosphoundecaprenol flippase subunit ArnF from Klebsiella pneumoniae subsp. pneumoniae (strain ATCC 700721 / MGH 78578).